A 522-amino-acid polypeptide reads, in one-letter code: DEAD-box ATP-dependent RNA helicase 1 (522 aa).

The short motif at 30-59 (CALDTLPCLNPKLKKALENMGISSLFPVQV) is the Q motif element. The 232-residue stretch at 66-297 (IGPGGFERDI…QLDLHHPLFM (232 aa)) folds into the Helicase ATP-binding domain. 79–86 (SPTGSGKT) provides a ligand contact to ATP. The DEAD box motif lies at 207-210 (DETD). Residues 325–475 (YLVALLKSWE…PIPPTSLDSI (151 aa)) form the Helicase C-terminal domain. The interval 490 to 522 (VESEAPKKGRQAFRHNSRTGNSQTKLNKPRSEA) is disordered. The span at 497–506 (KGRQAFRHNS) shows a compositional bias: basic residues.

This sequence belongs to the DEAD box helicase family. DDX51/DBP6 subfamily.

The enzyme catalyses ATP + H2O = ADP + phosphate + H(+). The protein is DEAD-box ATP-dependent RNA helicase 1 (RH1) of Arabidopsis thaliana (Mouse-ear cress).